Reading from the N-terminus, the 148-residue chain is Aspartate carbamoyltransferase regulatory chain (148 aa).

4 residues coordinate Zn(2+): cysteine 106, cysteine 111, cysteine 134, and cysteine 137.

It belongs to the PyrI family. As to quaternary structure, contains catalytic and regulatory chains. Zn(2+) is required as a cofactor.

In terms of biological role, involved in allosteric regulation of aspartate carbamoyltransferase. The chain is Aspartate carbamoyltransferase regulatory chain from Methanococcus maripaludis (strain C7 / ATCC BAA-1331).